The primary structure comprises 228 residues: CD9 antigen (228 aa).

The Cytoplasmic portion of the chain corresponds to 2–12 (PVKGGTKCIKY). The S-palmitoyl cysteine moiety is linked to residue C9. The chain crosses the membrane as a helical span at residues 13 to 33 (LLFGFNFIFWLAGIAVLAIGL). Topologically, residues 34 to 55 (WLRFDSQTKSIFEQETNNNNSS) are extracellular. N-linked (GlcNAc...) asparagine glycosylation is found at N52 and N53. A helical membrane pass occupies residues 56–76 (FYTGVYILIGAGALMMLVGFL). Residues 77–87 (GCCGAVQESQC) are Cytoplasmic-facing. Residues C78, C79, and C87 are each lipidated (S-palmitoyl cysteine). Residues 88 to 111 (MLGLFFGFLLVIFAIEIAAAIWGY) form a helical membrane-spanning segment. The Extracellular portion of the chain corresponds to 112-195 (SHKDEVIKEV…KEVFDNKFHI (84 aa)). Cystine bridges form between C152/C181 and C153/C167. Residues 196–221 (IGAVGIGIAVVMIFGMIFSMILCCAI) traverse the membrane as a helical segment. S-palmitoyl cysteine attachment occurs at residues C218 and C219. Residues 222–228 (RRNREMV) lie on the Cytoplasmic side of the membrane.

This sequence belongs to the tetraspanin (TM4SF) family. Forms both disulfide-linked homodimers and higher homooligomers as well as heterooligomers with other members of the tetraspanin family. Interacts (via the second extracellular domain) with integrin ITGAV:ITGB3. Interacts with integrin ITGA6:ITGB1; interaction takes place in oocytes and is involved in sperm-egg fusion. Part of integrin-tetraspanin complexes composed of CD81, beta-1 and beta-2 integrins in the membrane of monocyte/macrophages. Interacts with CD63; identified in a complex with CD63 and ITGB3. Associates with CR2/CD21 and with PTGFRN/CD9P1. Part of a complex composed of CD9, CD81, PTGFRN and IGSF8. Interacts directly with IGSF8. Interacts with PDPN; this interaction is homophilic and attenuates platelet aggregation and pulmonary metastasis induced by PDPN. Interacts (on T cell side) with CD81 at immunological synapses between antigen-presenting cells and T cells. In terms of processing, palmitoylated at a low, basal level in unstimulated platelets. The level of palmitoylation increases when platelets are activated by thrombin (in vitro). The protein exists in three forms with molecular masses between 22 and 27 kDa, and is known to carry covalently linked fatty acids. Palmitoylation by ZDHHC2 regulates CD9 expression, association with other tetraspanin family proteins and function in cell adhesion. Detected in platelets (at protein level). Expressed by a variety of hematopoietic and epithelial cells.

Its subcellular location is the cell membrane. It is found in the membrane. It localises to the secreted. The protein localises to the extracellular exosome. Integral membrane protein associated with integrins, which regulates different processes, such as sperm-egg fusion, platelet activation and aggregation, and cell adhesion. Present at the cell surface of oocytes and plays a key role in sperm-egg fusion, possibly by organizing multiprotein complexes and the morphology of the membrane required for the fusion. In myoblasts, associates with CD81 and PTGFRN and inhibits myotube fusion during muscle regeneration. In macrophages, associates with CD81 and beta-1 and beta-2 integrins, and prevents macrophage fusion into multinucleated giant cells specialized in ingesting complement-opsonized large particles. Also prevents the fusion between mononuclear cell progenitors into osteoclasts in charge of bone resorption. Acts as a receptor for PSG17. Involved in platelet activation and aggregation. Regulates paranodal junction formation. Involved in cell adhesion, cell motility and tumor metastasis. This is CD9 antigen from Homo sapiens (Human).